We begin with the raw amino-acid sequence, 310 residues long: Putative S-adenosyl-L-methionine-dependent methyltransferase MMAR_3534 (310 aa).

S-adenosyl-L-methionine contacts are provided by residues Asp-131 and 160–161 (DL).

This sequence belongs to the UPF0677 family.

In terms of biological role, exhibits S-adenosyl-L-methionine-dependent methyltransferase activity. In Mycobacterium marinum (strain ATCC BAA-535 / M), this protein is Putative S-adenosyl-L-methionine-dependent methyltransferase MMAR_3534.